The following is a 172-amino-acid chain: 6,7-dimethyl-8-ribityllumazine synthase (172 aa).

5-amino-6-(D-ribitylamino)uracil-binding positions include phenylalanine 24, 58 to 60 (ALE), and 82 to 84 (AVI). 87–88 (ET) is a binding site for (2S)-2-hydroxy-3-oxobutyl phosphate. Histidine 90 functions as the Proton donor in the catalytic mechanism. 5-amino-6-(D-ribitylamino)uracil is bound at residue asparagine 115. Arginine 129 is a binding site for (2S)-2-hydroxy-3-oxobutyl phosphate. The interval 150–172 (ALEQLDGDEDDEGEGEDDEEERA) is disordered. Residues 154 to 172 (LDGDEDDEGEGEDDEEERA) are compositionally biased toward acidic residues.

It belongs to the DMRL synthase family.

The catalysed reaction is (2S)-2-hydroxy-3-oxobutyl phosphate + 5-amino-6-(D-ribitylamino)uracil = 6,7-dimethyl-8-(1-D-ribityl)lumazine + phosphate + 2 H2O + H(+). Its pathway is cofactor biosynthesis; riboflavin biosynthesis; riboflavin from 2-hydroxy-3-oxobutyl phosphate and 5-amino-6-(D-ribitylamino)uracil: step 1/2. Catalyzes the formation of 6,7-dimethyl-8-ribityllumazine by condensation of 5-amino-6-(D-ribitylamino)uracil with 3,4-dihydroxy-2-butanone 4-phosphate. This is the penultimate step in the biosynthesis of riboflavin. This is 6,7-dimethyl-8-ribityllumazine synthase from Paraburkholderia phymatum (strain DSM 17167 / CIP 108236 / LMG 21445 / STM815) (Burkholderia phymatum).